We begin with the raw amino-acid sequence, 416 residues long: Mitochondrial inner membrane i-AAA protease complex subunit MGR1 (416 aa).

Residues 1-28 form a disordered region; it reads MAVFTPPSGNSNSTDHTHTQDDHDKDDN. Topologically, residues 1-56 are mitochondrial intermembrane; that stretch reads MAVFTPPSGNSNSTDHTHTQDDHDKDDNDIKKFYIRPSLGLKLWGPLVPAPDNLPG. A compositionally biased stretch (basic and acidic residues) spans 15–28; sequence DHTHTQDDHDKDDN. A helical transmembrane segment spans residues 57 to 73; it reads LYTLITIQSAVGFFALW. The Mitochondrial matrix segment spans residues 74-151; sequence RLRRLYKLPP…RQSRFVSVRK (78 aa). A helical membrane pass occupies residues 152-169; that stretch reads LLWGLFGSLLLSQSLLEL. Residues 170–416 lie on the Mitochondrial intermembrane side of the membrane; that stretch reads TRLNFLKYDP…PKALTNEKTH (247 aa). Residues 390 to 400 show a composition bias toward polar residues; sequence SHTKTPTSTDQ. The tract at residues 390-416 is disordered; the sequence is SHTKTPTSTDQPLPGPTPKALTNEKTH.

This sequence belongs to the MGR1 family. In terms of assembly, component of the mitochondrial inner membrane i-AAA protease complex composed of at least MRG1 and YME1. Interacts directly with YME1.

Its subcellular location is the mitochondrion inner membrane. In terms of biological role, component of the mitochondrial inner membrane i-AAA protease complex required for mitochondrial inner membrane protein turnover. Required for growth of cells lacking the mitochondrial genome. The chain is Mitochondrial inner membrane i-AAA protease complex subunit MGR1 (MGR1) from Saccharomyces cerevisiae (strain YJM789) (Baker's yeast).